Reading from the N-terminus, the 500-residue chain is Raftlin-2 (500 aa).

The N-myristoyl glycine moiety is linked to residue Gly2. The S-palmitoyl cysteine moiety is linked to residue Cys3. Residues 203-236 (GHLSESGVEEEPQHESGQHQTERNSSPSYANPKR) are disordered. Positions 213 to 224 (EPQHESGQHQTE) are enriched in basic and acidic residues. The residue at position 404 (Ser404) is a Phosphoserine. A disordered region spans residues 406–500 (AQTPERKGSR…EEGVTQVTCM (95 aa)). Position 408 is a phosphothreonine (Thr408). Residues 409-424 (PERKGSRLLKGEDRNK) show a composition bias toward basic and acidic residues. The segment covering 426-438 (SSRSLGLDTNASQ) has biased composition (polar residues). Ser429 is modified (phosphoserine). Low complexity predominate over residues 467–478 (SDSFSGFSSSDS).

The protein belongs to the raftlin family. Expressed in B-cells, heart, brain, spleen, large intestine and lung. Expressed in dendritic cells and macrophages.

The protein resides in the cell membrane. Upon bacterial lipopolysaccharide stimulation, mediates clathrin-dependent internalization of TLR4 in dendritic cells, resulting in activation of TICAM1-mediated signaling and subsequent IFNB1 production. May regulate B-cell antigen receptor-mediated signaling. The sequence is that of Raftlin-2 (Rftn2) from Mus musculus (Mouse).